Consider the following 350-residue polypeptide: Putative [LysW]-lysine/[LysW]-ornithine hydrolase (350 aa).

Residue His72 coordinates Zn(2+). The active site involves Asp74. Residue Asp96 participates in Zn(2+) binding. The Proton acceptor role is filled by Glu128. Zn(2+)-binding residues include Glu129, Glu152, and His321.

It belongs to the peptidase M20A family. LysK subfamily. Zn(2+) is required as a cofactor. Co(2+) serves as cofactor.

The protein resides in the cytoplasm. It catalyses the reaction [amino-group carrier protein]-C-terminal-gamma-(L-lysyl)-L-glutamate + H2O = [amino-group carrier protein]-C-terminal-L-glutamate + L-lysine. The catalysed reaction is [amino-group carrier protein]-C-terminal-gamma-(L-ornithyl)-L-glutamate + H2O = [amino-group carrier protein]-C-terminal-L-glutamate + L-ornithine. Its pathway is amino-acid biosynthesis; L-lysine biosynthesis via AAA pathway; L-lysine from L-alpha-aminoadipate (Thermus route): step 5/5. It participates in amino-acid biosynthesis; L-arginine biosynthesis. Functionally, catalyzes the release of L-lysine from [LysW]-gamma-L-lysine and the release of L-ornithine from [LysW]-L-ornithine. The protein is Putative [LysW]-lysine/[LysW]-ornithine hydrolase of Aeropyrum pernix (strain ATCC 700893 / DSM 11879 / JCM 9820 / NBRC 100138 / K1).